Reading from the N-terminus, the 468-residue chain is POC1 centriolar protein homolog B (468 aa).

WD repeat units lie at residues G16–K55, G58–V97, A100–S139, Q142–T181, D184–H223, V226–T265, and G268–K307. A coiled-coil region spans residues N420–K459.

This sequence belongs to the WD repeat POC1 family. In terms of assembly, interacts with pat. In terms of tissue distribution, highly expressed in ovary and, at low levels, in testis.

Its subcellular location is the cytoplasm. It is found in the cytoskeleton. It localises to the microtubule organizing center. The protein resides in the centrosome. The protein localises to the centriole. In terms of biological role, plays an important role in centriole assembly and/or stability and ciliogenesis. Involved in early steps of centriole duplication, as well as in the later steps of centriole length control. The chain is POC1 centriolar protein homolog B (poc1b) from Xenopus laevis (African clawed frog).